The sequence spans 273 residues: Thymidylate synthase (273 aa).

DUMP is bound at residue R31. Residue H61 coordinates (6R)-5,10-methylene-5,6,7,8-tetrahydrofolate. 136–137 (RR) contributes to the dUMP binding site. The Nucleophile role is filled by C156. Residues 176–179 (RSAD), N187, and 217–219 (HIY) each bind dUMP. D179 contacts (6R)-5,10-methylene-5,6,7,8-tetrahydrofolate. Residue A272 participates in (6R)-5,10-methylene-5,6,7,8-tetrahydrofolate binding.

This sequence belongs to the thymidylate synthase family. Bacterial-type ThyA subfamily. As to quaternary structure, homodimer.

It is found in the cytoplasm. It catalyses the reaction dUMP + (6R)-5,10-methylene-5,6,7,8-tetrahydrofolate = 7,8-dihydrofolate + dTMP. Its pathway is pyrimidine metabolism; dTTP biosynthesis. Functionally, catalyzes the reductive methylation of 2'-deoxyuridine-5'-monophosphate (dUMP) to 2'-deoxythymidine-5'-monophosphate (dTMP) while utilizing 5,10-methylenetetrahydrofolate (mTHF) as the methyl donor and reductant in the reaction, yielding dihydrofolate (DHF) as a by-product. This enzymatic reaction provides an intracellular de novo source of dTMP, an essential precursor for DNA biosynthesis. This chain is Thymidylate synthase, found in Corynebacterium jeikeium (strain K411).